The chain runs to 101 residues: Large ribosomal subunit protein uL23 (101 aa).

Belongs to the universal ribosomal protein uL23 family. In terms of assembly, part of the 50S ribosomal subunit. Contacts protein L29, and trigger factor when it is bound to the ribosome.

Functionally, one of the early assembly proteins it binds 23S rRNA. One of the proteins that surrounds the polypeptide exit tunnel on the outside of the ribosome. Forms the main docking site for trigger factor binding to the ribosome. In Azoarcus sp. (strain BH72), this protein is Large ribosomal subunit protein uL23.